The chain runs to 75 residues: MSAMVQIRNVPDELLHELKARAAAQRMSLSDFLLARLAEIAEEPALDDVLDRLAALPRRDLGASAAELVDEARSE.

Its function is as follows. Putative antitoxin component of a possible type II toxin-antitoxin (TA) system. The cognate toxin is VapC12. This is Putative antitoxin VapB12 (vapB12) from Mycobacterium tuberculosis (strain CDC 1551 / Oshkosh).